A 269-amino-acid polypeptide reads, in one-letter code: Diaminopimelate epimerase (269 aa).

The substrate site is built by N15, Q49, and N66. C75 (proton donor) is an active-site residue. Substrate is bound by residues 76–77 (GN), N155, N187, and 204–205 (ER). Residue C213 is the Proton acceptor of the active site. 214-215 (GS) is a binding site for substrate.

It belongs to the diaminopimelate epimerase family. Homodimer.

The protein resides in the cytoplasm. It carries out the reaction (2S,6S)-2,6-diaminopimelate = meso-2,6-diaminopimelate. It participates in amino-acid biosynthesis; L-lysine biosynthesis via DAP pathway; DL-2,6-diaminopimelate from LL-2,6-diaminopimelate: step 1/1. Catalyzes the stereoinversion of LL-2,6-diaminopimelate (L,L-DAP) to meso-diaminopimelate (meso-DAP), a precursor of L-lysine and an essential component of the bacterial peptidoglycan. The sequence is that of Diaminopimelate epimerase from Rickettsia bellii (strain OSU 85-389).